The sequence spans 381 residues: Arginine biosynthesis bifunctional protein ArgJ (381 aa).

Substrate is bound by residues T143, K165, T176, E255, N376, and T381. Residue T176 is the Nucleophile of the active site.

It belongs to the ArgJ family. In terms of assembly, heterotetramer of two alpha and two beta chains.

The protein resides in the cytoplasm. The enzyme catalyses N(2)-acetyl-L-ornithine + L-glutamate = N-acetyl-L-glutamate + L-ornithine. It catalyses the reaction L-glutamate + acetyl-CoA = N-acetyl-L-glutamate + CoA + H(+). The protein operates within amino-acid biosynthesis; L-arginine biosynthesis; L-ornithine and N-acetyl-L-glutamate from L-glutamate and N(2)-acetyl-L-ornithine (cyclic): step 1/1. Its pathway is amino-acid biosynthesis; L-arginine biosynthesis; N(2)-acetyl-L-ornithine from L-glutamate: step 1/4. Its function is as follows. Catalyzes two activities which are involved in the cyclic version of arginine biosynthesis: the synthesis of N-acetylglutamate from glutamate and acetyl-CoA as the acetyl donor, and of ornithine by transacetylation between N(2)-acetylornithine and glutamate. In Thermus thermophilus (strain ATCC BAA-163 / DSM 7039 / HB27), this protein is Arginine biosynthesis bifunctional protein ArgJ.